The sequence spans 255 residues: 5'-nucleotidase SurE (255 aa).

A divalent metal cation-binding residues include Asp-8, Asp-9, Ser-39, and Asn-91.

This sequence belongs to the SurE nucleotidase family. A divalent metal cation is required as a cofactor.

The protein resides in the cytoplasm. The catalysed reaction is a ribonucleoside 5'-phosphate + H2O = a ribonucleoside + phosphate. Functionally, nucleotidase that shows phosphatase activity on nucleoside 5'-monophosphates. The polypeptide is 5'-nucleotidase SurE (Acinetobacter baylyi (strain ATCC 33305 / BD413 / ADP1)).